A 450-amino-acid polypeptide reads, in one-letter code: 3-phosphoshikimate 1-carboxyvinyltransferase (450 aa).

A disordered region spans residues 1 to 26; sequence MSAHGDPIPMTAHPSGPLSGTAQVPG. Residues Lys-28, Ser-29, and Arg-33 each contribute to the 3-phosphoshikimate site. Lys-28 contacts phosphoenolpyruvate. 2 residues coordinate phosphoenolpyruvate: Gly-101 and Arg-129. 4 residues coordinate 3-phosphoshikimate: Ser-174, Gln-176, Asp-327, and Lys-354. Residue Gln-176 coordinates phosphoenolpyruvate. Asp-327 (proton acceptor) is an active-site residue. Residues Arg-358 and Arg-403 each contribute to the phosphoenolpyruvate site.

Belongs to the EPSP synthase family. As to quaternary structure, monomer.

It localises to the cytoplasm. It catalyses the reaction 3-phosphoshikimate + phosphoenolpyruvate = 5-O-(1-carboxyvinyl)-3-phosphoshikimate + phosphate. It participates in metabolic intermediate biosynthesis; chorismate biosynthesis; chorismate from D-erythrose 4-phosphate and phosphoenolpyruvate: step 6/7. Functionally, catalyzes the transfer of the enolpyruvyl moiety of phosphoenolpyruvate (PEP) to the 5-hydroxyl of shikimate-3-phosphate (S3P) to produce enolpyruvyl shikimate-3-phosphate and inorganic phosphate. In Dinoroseobacter shibae (strain DSM 16493 / NCIMB 14021 / DFL 12), this protein is 3-phosphoshikimate 1-carboxyvinyltransferase.